The following is a 499-amino-acid chain: Putative sperm motility kinase W (499 aa).

The region spanning 14–262 is the Protein kinase domain; it reads YKVLFTLGHG…IEDIERHPWV (249 aa). ATP contacts are provided by residues 20–28 and Lys-43; that span reads LGHGSFGTV. Asp-133 acts as the Proton acceptor in catalysis. The 41-residue stretch at 274-314 folds into the UBA domain; the sequence is DPDYNIIEMLCGMGFDANEILESLQRKKYNESMGAYLILKA.

The protein belongs to the protein kinase superfamily. CAMK Ser/Thr protein kinase family. Smok subfamily.

The enzyme catalyses L-seryl-[protein] + ATP = O-phospho-L-seryl-[protein] + ADP + H(+). It catalyses the reaction L-threonyl-[protein] + ATP = O-phospho-L-threonyl-[protein] + ADP + H(+). In terms of biological role, may play a role in sperm motility, especially in the regulation of flagellar function. This Mus musculus (Mouse) protein is Putative sperm motility kinase W.